Here is a 157-residue protein sequence, read N- to C-terminus: MKTPLITREGYETLKQELNYLWREERPEVTKKVTWAASLGDRSENADYQYNKKRLREIDRRVRYLTKCMENLKIVDYSPQQEGKVFFGAWVEIENDDGDTLKFRIVGYDEIFGRKDYISIDSPMARALLKKEVGDLAVVNTPVGEANWYVNAIEYVK.

It belongs to the GreA/GreB family. GreB subfamily.

In terms of biological role, necessary for efficient RNA polymerase transcription elongation past template-encoded arresting sites. The arresting sites in DNA have the property of trapping a certain fraction of elongating RNA polymerases that pass through, resulting in locked ternary complexes. Cleavage of the nascent transcript by cleavage factors such as GreA or GreB allows the resumption of elongation from the new 3'terminus. GreB releases sequences of up to 9 nucleotides in length. In Salmonella typhi, this protein is Transcription elongation factor GreB.